The sequence spans 477 residues: Bifunctional protein HldE (477 aa).

Residues 1–319 (MKITLPPFDQ…RALQEQEQSG (319 aa)) are ribokinase. An ATP-binding site is contributed by 195–198 (NLAE). D264 is a catalytic residue. A cytidylyltransferase region spans residues 344–477 (MTNGCFDLLH…IERMQSAPDT (134 aa)).

The protein in the N-terminal section; belongs to the carbohydrate kinase PfkB family. This sequence in the C-terminal section; belongs to the cytidylyltransferase family. In terms of assembly, homodimer.

It carries out the reaction D-glycero-beta-D-manno-heptose 7-phosphate + ATP = D-glycero-beta-D-manno-heptose 1,7-bisphosphate + ADP + H(+). The enzyme catalyses D-glycero-beta-D-manno-heptose 1-phosphate + ATP + H(+) = ADP-D-glycero-beta-D-manno-heptose + diphosphate. Its pathway is nucleotide-sugar biosynthesis; ADP-L-glycero-beta-D-manno-heptose biosynthesis; ADP-L-glycero-beta-D-manno-heptose from D-glycero-beta-D-manno-heptose 7-phosphate: step 1/4. The protein operates within nucleotide-sugar biosynthesis; ADP-L-glycero-beta-D-manno-heptose biosynthesis; ADP-L-glycero-beta-D-manno-heptose from D-glycero-beta-D-manno-heptose 7-phosphate: step 3/4. Functionally, catalyzes the phosphorylation of D-glycero-D-manno-heptose 7-phosphate at the C-1 position to selectively form D-glycero-beta-D-manno-heptose-1,7-bisphosphate. Catalyzes the ADP transfer from ATP to D-glycero-beta-D-manno-heptose 1-phosphate, yielding ADP-D-glycero-beta-D-manno-heptose. In Alkalilimnicola ehrlichii (strain ATCC BAA-1101 / DSM 17681 / MLHE-1), this protein is Bifunctional protein HldE.